The chain runs to 824 residues: ABC transporter B family member 7 (824 aa).

Residues 41 to 101 (RNSVKFNLDT…NKNNKNKINN (61 aa)) form a disordered region. The span at 63–101 (NNNKNNNNNNNNNNNNNNNNNNNNNNNNNNKNNKNKINN) shows a compositional bias: low complexity. 6 helical membrane passes run 164–184 (IWYF…QLAL), 252–272 (WIII…LLFT), 325–345 (LSTL…LVFL), 347–367 (WKVT…FLVF), 431–451 (AFWI…IYGF), and 461–481 (ILLL…NGLI). The ABC transmembrane type-1 domain occupies 167 to 489 (FVFAFLALSI…LIGSINEIQK (323 aa)). Residues 521-767 (ISFDNVYFNN…STSFYVTSVL (247 aa)) form the ABC transporter domain. An ATP-binding site is contributed by 570–576 (GPSQSKE). Positions 772–813 (NKYNNNNNNNNNNNNNNNNNNNNNNNNNNNNNNNNNNNNINN) are disordered.

The protein belongs to the ABC transporter superfamily. ABCB family.

The protein localises to the membrane. This is ABC transporter B family member 7 (abcB7) from Dictyostelium discoideum (Social amoeba).